The sequence spans 785 residues: Tripartite terminase subunit 1 (785 aa).

The C3H1-type zinc-finger motif lies at cysteine 201–histidine 229. The tract at residues glycine 439 to aspartate 487 is disordered. Residues proline 450–arginine 459 are compositionally biased toward basic and acidic residues. Phenylalanine 696–glycine 703 serves as a coordination point for ATP.

The protein belongs to the herpesviridae TRM1 protein family. In terms of assembly, associates with TRM2 and TRM3 to form the tripartite terminase complex. Interacts with portal protein.

It localises to the host nucleus. Its function is as follows. Component of the molecular motor that translocates viral genomic DNA in empty capsid during DNA packaging. Forms a tripartite terminase complex together with TRM2 and TRM3 in the host cytoplasm. Once the complex reaches the host nucleus, it interacts with the capsid portal vertex. This portal forms a ring in which genomic DNA is translocated into the capsid. TRM1 carries an endonuclease activity that plays an important role for the cleavage of concatemeric viral DNA into unit length genomes. This is Tripartite terminase subunit 1 from Human herpesvirus 2 (strain HG52) (HHV-2).